Reading from the N-terminus, the 632-residue chain is Phosphomethylpyrimidine synthase (632 aa).

Residues N237, M266, Y295, H331, 351–353 (SRG), 392–395 (DGLR), and E431 each bind substrate. H435 lines the Zn(2+) pocket. Y458 is a substrate binding site. H499 contacts Zn(2+). C579, C582, and C587 together coordinate [4Fe-4S] cluster.

Belongs to the ThiC family. Homodimer. It depends on [4Fe-4S] cluster as a cofactor.

The enzyme catalyses 5-amino-1-(5-phospho-beta-D-ribosyl)imidazole + S-adenosyl-L-methionine = 4-amino-2-methyl-5-(phosphooxymethyl)pyrimidine + CO + 5'-deoxyadenosine + formate + L-methionine + 3 H(+). Its pathway is cofactor biosynthesis; thiamine diphosphate biosynthesis. Functionally, catalyzes the synthesis of the hydroxymethylpyrimidine phosphate (HMP-P) moiety of thiamine from aminoimidazole ribotide (AIR) in a radical S-adenosyl-L-methionine (SAM)-dependent reaction. The sequence is that of Phosphomethylpyrimidine synthase from Chromobacterium violaceum (strain ATCC 12472 / DSM 30191 / JCM 1249 / CCUG 213 / NBRC 12614 / NCIMB 9131 / NCTC 9757 / MK).